A 431-amino-acid polypeptide reads, in one-letter code: Light-independent protochlorophyllide reductase subunit N (431 aa).

[4Fe-4S] cluster contacts are provided by Cys29, Cys54, and Cys114.

Belongs to the BchN/ChlN family. In terms of assembly, protochlorophyllide reductase is composed of three subunits; ChlL, ChlN and ChlB. Forms a heterotetramer of two ChlB and two ChlN subunits. The cofactor is [4Fe-4S] cluster.

The protein localises to the plastid. The protein resides in the chloroplast. The enzyme catalyses chlorophyllide a + oxidized 2[4Fe-4S]-[ferredoxin] + 2 ADP + 2 phosphate = protochlorophyllide a + reduced 2[4Fe-4S]-[ferredoxin] + 2 ATP + 2 H2O. It functions in the pathway porphyrin-containing compound metabolism; chlorophyll biosynthesis (light-independent). Component of the dark-operative protochlorophyllide reductase (DPOR) that uses Mg-ATP and reduced ferredoxin to reduce ring D of protochlorophyllide (Pchlide) to form chlorophyllide a (Chlide). This reaction is light-independent. The NB-protein (ChlN-ChlB) is the catalytic component of the complex. This chain is Light-independent protochlorophyllide reductase subunit N, found in Nephroselmis olivacea (Green alga).